The primary structure comprises 205 residues: Small ribosomal subunit protein uS4c (205 aa).

The disordered stretch occupies residues 16–40; it reads GKLPSLTNKTSKKRKSPGQPATSFK. Residues 93–161 form the S4 RNA-binding domain; the sequence is MRLDNIVHRI…IQKNIESKEL (69 aa).

This sequence belongs to the universal ribosomal protein uS4 family. In terms of assembly, part of the 30S ribosomal subunit. Contacts protein S5. The interaction surface between S4 and S5 is involved in control of translational fidelity.

The protein localises to the plastid. It is found in the chloroplast. In terms of biological role, one of the primary rRNA binding proteins, it binds directly to 16S rRNA where it nucleates assembly of the body of the 30S subunit. With S5 and S12 plays an important role in translational accuracy. This Euglena gracilis protein is Small ribosomal subunit protein uS4c (rps4).